The chain runs to 89 residues: Small ribosomal subunit protein uS15 (89 aa).

Belongs to the universal ribosomal protein uS15 family. As to quaternary structure, part of the 30S ribosomal subunit. Forms a bridge to the 50S subunit in the 70S ribosome, contacting the 23S rRNA.

Functionally, one of the primary rRNA binding proteins, it binds directly to 16S rRNA where it helps nucleate assembly of the platform of the 30S subunit by binding and bridging several RNA helices of the 16S rRNA. Forms an intersubunit bridge (bridge B4) with the 23S rRNA of the 50S subunit in the ribosome. This is Small ribosomal subunit protein uS15 from Gloeothece citriformis (strain PCC 7424) (Cyanothece sp. (strain PCC 7424)).